Reading from the N-terminus, the 2375-residue chain is CCR4-NOT transcription complex subunit 1 (2375 aa).

3 short sequence motifs (LXXLL) span residues 153–157 (LPDLL), 181–185 (LHLLL), and 223–227 (LAPLL). Phosphoserine is present on Ser-318. An LXXLL motif is present at residues 570–574 (LSMLL). Residues 725–770 (SAAPHTQSMQGFPPNLGSAFSTPQSPAKAFPPLSTPNQTTAFSGIG) form a disordered region. Residues 799-1014 (NNDPFVQRKL…QGSITTPGSI (216 aa)) form an interaction with ZFP36 region. Ser-1060 carries the post-translational modification Phosphoserine. Residues 1089-1604 (EPPENIQEKI…AQPMKQAWAT (516 aa)) form an interaction with CNOT6, CNOT6L, CNOT7 and CNOT8 region. Positions 1314 to 1326 (QLSAPKKDVKQPE) are enriched in basic and acidic residues. The interval 1314–1351 (QLSAPKKDVKQPEELPAITTTTTSTTPATSTTCTATVP) is disordered. Positions 1332–1349 (TTTTTSTTPATSTTCTAT) are enriched in low complexity. 3 consecutive short sequence motifs (LXXLL) follow at residues 1638–1642 (LRSLL), 1941–1945 (LIALL), and 2095–2099 (LRVLL).

The protein belongs to the CNOT1 family. In terms of assembly, component of the CCR4-NOT complex; distinct complexes seem to exist that differ in the participation of probably mutually exclusive catalytic subunits. In the complex, interacts directly with CNOT6, CNOT6L, CNOT7 or CNOT8. Interacts in a ligand-dependent fashion with ESR1 and RXRA. Interacts with NANOS2, TOB1 and ZFP36. Interacts with TNRC6A, TNRC6B or TNRC6C; the interactions are direct. Interacts with YTHDF2; the interaction is direct and promotes recruitment of the CCR4-NOT complex to N6-methyladenosine (m6A)-containing mRNAs, leading to their deadenylation and subsequent degradation. Interacts with EIF4ENIF1/4E-T. Interacts in an RNA-independent manner with BICC1 (via KH domains). Interacts with TEX13A; the interaction may inhibit CNOT1 binding to mRNA and subsequently CNOT1-mediated mRNA degradation.

It is found in the cytoplasm. The protein resides in the P-body. Its subcellular location is the nucleus. In terms of biological role, scaffolding component of the CCR4-NOT complex which is one of the major cellular mRNA deadenylases and is linked to various cellular processes including bulk mRNA degradation, miRNA-mediated repression, translational repression during translational initiation and general transcription regulation. Additional complex functions may be a consequence of its influence on mRNA expression. Its scaffolding function implies its interaction with the catalytic complex module and diverse RNA-binding proteins mediating the complex recruitment to selected mRNA 3'UTRs. Involved in degradation of AU-rich element (ARE)-containing mRNAs probably via association with ZFP36. Mediates the recruitment of the CCR4-NOT complex to miRNA targets and to the RISC complex via association with TNRC6A, TNRC6B or TNRC6C. Acts as a transcriptional repressor. Represses the ligand-dependent transcriptional activation by nuclear receptors. Involved in the maintenance of embryonic stem (ES) cell identity; prevents their differentiation towards extraembryonic trophectoderm lineages. Plays a role in rapid sperm motility via mediating timely mRNA turnover. This chain is CCR4-NOT transcription complex subunit 1 (Cnot1), found in Mus musculus (Mouse).